Reading from the N-terminus, the 437-residue chain is Chromosomal replication initiator protein DnaA (437 aa).

Positions 1-72 (MEQFNAFKSL…ESLYEGIKSV (72 aa)) are domain I, interacts with DnaA modulators. The interval 72–99 (VNFVNEQDFFFNLAKLEENSRDTLYQNS) is domain II. Residues 100–320 (GLSKNYTFQN…GIATKLLFFA (221 aa)) are domain III, AAA+ region. ATP is bound by residues Gly-144, Gly-146, Lys-147, and Thr-148. The interval 321–437 (KTSKQNLINT…LRDVITSLVI (117 aa)) is domain IV, binds dsDNA.

Belongs to the DnaA family. In terms of assembly, oligomerizes as a right-handed, spiral filament on DNA at oriC.

It is found in the cytoplasm. Plays an essential role in the initiation and regulation of chromosomal replication. ATP-DnaA binds to the origin of replication (oriC) to initiate formation of the DNA replication initiation complex once per cell cycle. Binds the DnaA box (a 9 base pair repeat at the origin) and separates the double-stranded (ds)DNA. Forms a right-handed helical filament on oriC DNA; dsDNA binds to the exterior of the filament while single-stranded (ss)DNA is stabiized in the filament's interior. The ATP-DnaA-oriC complex binds and stabilizes one strand of the AT-rich DNA unwinding element (DUE), permitting loading of DNA polymerase. After initiation quickly degrades to an ADP-DnaA complex that is not apt for DNA replication. Binds acidic phospholipids. The protein is Chromosomal replication initiator protein DnaA of Mycoplasma genitalium (strain ATCC 33530 / DSM 19775 / NCTC 10195 / G37) (Mycoplasmoides genitalium).